The primary structure comprises 73 residues: Small ribosomal subunit protein bS21 (73 aa).

It belongs to the bacterial ribosomal protein bS21 family.

This is Small ribosomal subunit protein bS21 from Parvibaculum lavamentivorans (strain DS-1 / DSM 13023 / NCIMB 13966).